Reading from the N-terminus, the 448-residue chain is Tubulin beta chain (448 aa).

8 residues coordinate GTP: Q11, E69, S138, G142, T143, G144, N204, and N226. E69 is a binding site for Mg(2+). Positions 425–448 (YQDASISEGEEEYLEEEEPLEHEE) are disordered. Residues 432–448 (EGEEEYLEEEEPLEHEE) show a composition bias toward acidic residues.

Belongs to the tubulin family. In terms of assembly, dimer of alpha and beta chains. A typical microtubule is a hollow water-filled tube with an outer diameter of 25 nm and an inner diameter of 15 nM. Alpha-beta heterodimers associate head-to-tail to form protofilaments running lengthwise along the microtubule wall with the beta-tubulin subunit facing the microtubule plus end conferring a structural polarity. Microtubules usually have 13 protofilaments but different protofilament numbers can be found in some organisms and specialized cells. Requires Mg(2+) as cofactor.

Its subcellular location is the cytoplasm. It is found in the cytoskeleton. In terms of biological role, tubulin is the major constituent of microtubules, a cylinder consisting of laterally associated linear protofilaments composed of alpha- and beta-tubulin heterodimers. Microtubules grow by the addition of GTP-tubulin dimers to the microtubule end, where a stabilizing cap forms. Below the cap, tubulin dimers are in GDP-bound state, owing to GTPase activity of alpha-tubulin. This Aspergillus oryzae (strain ATCC 42149 / RIB 40) (Yellow koji mold) protein is Tubulin beta chain (benA56).